The sequence spans 731 residues: MKLDKLFEKFLSLFKKETSELEDSDSTILRRSRSDRKKLAQVGPIRKFWRRYHLTKIILILGLSAGLLVGIYLFAVAKSTNVNDLQNALKTRTLIFDREEKEAGALSGQKGTYVELTDISKNLQNAVIATEDRSFYKNDGINYGRFFLAIVTAGRSGGGSTITQQLAKNAYLSQDQTVERKAKEFFLALELSKKYSKEQILTMYLNNAYFGNGVWGVEDASKKYFGVSASEVSLDQAATLAGMLKGPELYNPLNSVEDSTNRRDTVLQNMVAAGYIDKNQETEAAEVDMTSQLHDKYEGKISDYRYPSYFDAVVNEAVSKYNLTEEEIVNNGYRIYTELDQNYQANMQIVYENTSLFPRAEDGTFAQSGSVALEPKTGGVRGVVGQVADNDKTGFRNFNYATQSKRSPGSTIKPLVVYTPAVEAGWALNKQLDNHTMQYDSYKVDNYAGIKTSREVPMYQSLAESLNLPAVATVNDLGVDKAFEAGEKFGLNMEKVDRVLGVALGSGVETNPLQMAQAYAAFANEGLMPEAHFISRIENASGQVIASHKNSQKRVIDKSVADKMTSMMLGTFTNGTGISSSPADYVMAGKTGTTEAVFNPEYTSDQWVIGYTPDVVISHWLGFPTTDENHYLAGSTSNGAAHVFRNIANTILPYTPGSTFTVENAYKQNGIAPANTKRQVQTNDNSQTDDNLSDIRGRAQSLVDEASRAISDAKIKEKAQTIWDSIVNLFR.

Residues 1–56 are Cytoplasmic-facing; that stretch reads MKLDKLFEKFLSLFKKETSELEDSDSTILRRSRSDRKKLAQVGPIRKFWRRYHLTK. A helical; Signal-anchor for type II membrane protein membrane pass occupies residues 57–77; the sequence is IILILGLSAGLLVGIYLFAVA. The hydrophobic; associated with cytoplasmic membrane. Required for transglycosylase activity, but not for lipid II binding stretch occupies residues 78-156; it reads KSTNVNDLQN…FLAIVTAGRS (79 aa). The interval 78–300 is transglycosylase; sequence KSTNVNDLQN…SQLHDKYEGK (223 aa). The Extracellular portion of the chain corresponds to 78-731; it reads KSTNVNDLQN…IWDSIVNLFR (654 aa). Glutamate 131 serves as the catalytic Proton donor; for transglycosylase activity. The transpeptidase stretch occupies residues 301 to 731; sequence ISDYRYPSYF…IWDSIVNLFR (431 aa). Serine 410 (acyl-ester intermediate; for transpeptidase activity) is an active-site residue. The disordered stretch occupies residues 674–694; sequence ANTKRQVQTNDNSQTDDNLSD. Polar residues predominate over residues 676–690; that stretch reads TKRQVQTNDNSQTDD.

In the N-terminal section; belongs to the glycosyltransferase 51 family. The protein in the C-terminal section; belongs to the transpeptidase family. As to quaternary structure, homodimer. May also form higher order oligomers. Self-association may depend on its transmembrane and/or cytoplasmic regions. Interacts with MacP; interaction is required for the function of this protein.

The protein resides in the cell membrane. It localises to the secreted. Its subcellular location is the cell wall. It carries out the reaction Preferential cleavage: (Ac)2-L-Lys-D-Ala-|-D-Ala. Also transpeptidation of peptidyl-alanyl moieties that are N-acyl substituents of D-alanine.. The enzyme catalyses [GlcNAc-(1-&gt;4)-Mur2Ac(oyl-L-Ala-gamma-D-Glu-L-Lys-D-Ala-D-Ala)](n)-di-trans,octa-cis-undecaprenyl diphosphate + beta-D-GlcNAc-(1-&gt;4)-Mur2Ac(oyl-L-Ala-gamma-D-Glu-L-Lys-D-Ala-D-Ala)-di-trans,octa-cis-undecaprenyl diphosphate = [GlcNAc-(1-&gt;4)-Mur2Ac(oyl-L-Ala-gamma-D-Glu-L-Lys-D-Ala-D-Ala)](n+1)-di-trans,octa-cis-undecaprenyl diphosphate + di-trans,octa-cis-undecaprenyl diphosphate + H(+). The protein operates within cell wall biogenesis; peptidoglycan biosynthesis. Cell wall formation. Synthesis of cross-linked peptidoglycan (PG) from the lipid intermediates. Binds dansylated lipid II and catalyzes the polymerization of glycan chains. Hydrolyzes S2d (N-benzoyl-D-alanylmercaptoacetic acid) molecule, a synthetic thiolester analog of cell wall stem peptide. Active against bocillin, a fluorescent penicillin. No transpeptidase activity with non-fluorescent lysine-containing lipid II as substrate. This is Penicillin-binding protein 2a from Streptococcus pneumoniae serotype 2 (strain D39 / NCTC 7466).